Reading from the N-terminus, the 708-residue chain is Leukotoxin translocation ATP-binding protein LktB (708 aa).

One can recognise a Peptidase C39 domain in the interval 1–126 (MEANHQRNDL…ACYQGQLILV (126 aa)). The ABC transmembrane type-1 domain maps to 155 to 437 (FLETLIVSIF…LAQLWQDFQQ (283 aa)). Helical transmembrane passes span 159 to 179 (LIVS…FQVV), 192 to 212 (LNII…LSGL), 270 to 290 (ALTS…MWYY), 296 to 316 (LVIL…SPIL), and 389 to 409 (VMVI…LSIG). The ABC transporter domain occupies 469-704 (ISFKNIRFRY…SNGLYSYLHQ (236 aa)). An ATP-binding site is contributed by 503–510 (GRSGSGKS).

It belongs to the ABC transporter superfamily. Protein-1 exporter (TC 3.A.1.109) family. In terms of assembly, homodimer.

It is found in the cell inner membrane. It carries out the reaction ATP + H2O + proteinSide 1 = ADP + phosphate + proteinSide 2.. Its function is as follows. Part of the ABC transporter complex LktBD involved in leukotoxin export. Transmembrane domains (TMD) form a pore in the inner membrane and the ATP-binding domain (NBD) is responsible for energy generation. This is Leukotoxin translocation ATP-binding protein LktB (lktB) from Mannheimia haemolytica (Pasteurella haemolytica).